The primary structure comprises 633 residues: uncharacterized protein (633 aa).

A disordered region spans residues 1–188 (MNNRGGFSHP…GQSSFYNSSY (188 aa)). Composition is skewed to low complexity over residues 32 to 80 (GQPQ…GGNN) and 104 to 148 (NNGN…TNSR). Gly residues predominate over residues 152 to 178 (RGGSSRGGSSRGGNSGSSRGGSRGGYR). Residues 580-607 (KSKNWTVDQASDELKKLSKNLRLLVSKH) adopt a coiled-coil conformation. Residues 611–633 (TKFQPPSADHTTQFEQDDEEEEN) form a disordered region.

This is an uncharacterized protein from Dictyostelium discoideum (Social amoeba).